A 337-amino-acid polypeptide reads, in one-letter code: MESATSLISEKQCECAHPNSDSAVQGSSLRWSIAAIESLLDLPFSDLIFQAQTVHRQYHDANAVQLSTLISVKTGGCSEDCAYCPQAARYHTGVENQAILSREEVVAAATQAKESGATRFCMGAAWRGPKQRDIEYMTEVISAVKALGMETCATLGILKPGQATQLKQAGLDYYNHNLDTAPEFYGEIITTREYQDRLDTLEEVRGANINVCCGGIVGLGESRMARAGLIAQLANLDPYPESVPINYLVQVEGTPLYGTPELDPFEFVRTIAAARITMPKAMVRLSAGRRQMPEAIQALCFLAGANSIFYGDKLLTTGNPDTEKDLALFEKLGLHAL.

In terms of domain architecture, Radical SAM core spans 62–289; that stretch reads NAVQLSTLIS…KAMVRLSAGR (228 aa). [4Fe-4S] cluster is bound by residues cysteine 77, cysteine 81, and cysteine 84. 4 residues coordinate [2Fe-2S] cluster: cysteine 121, cysteine 152, cysteine 212, and arginine 284.

It belongs to the radical SAM superfamily. Biotin synthase family. As to quaternary structure, homodimer. The cofactor is [4Fe-4S] cluster. [2Fe-2S] cluster is required as a cofactor.

It carries out the reaction (4R,5S)-dethiobiotin + (sulfur carrier)-SH + 2 reduced [2Fe-2S]-[ferredoxin] + 2 S-adenosyl-L-methionine = (sulfur carrier)-H + biotin + 2 5'-deoxyadenosine + 2 L-methionine + 2 oxidized [2Fe-2S]-[ferredoxin]. It participates in cofactor biosynthesis; biotin biosynthesis; biotin from 7,8-diaminononanoate: step 2/2. In terms of biological role, catalyzes the conversion of dethiobiotin (DTB) to biotin by the insertion of a sulfur atom into dethiobiotin via a radical-based mechanism. In Nitrosomonas europaea (strain ATCC 19718 / CIP 103999 / KCTC 2705 / NBRC 14298), this protein is Biotin synthase.